A 241-amino-acid chain; its full sequence is Large ribosomal subunit protein bL25 (241 aa).

Positions 214-241 (LDAVKAGEEGSRAQQETEEASERADQGQ) are disordered.

Belongs to the bacterial ribosomal protein bL25 family. CTC subfamily. In terms of assembly, part of the 50S ribosomal subunit; part of the 5S rRNA/L5/L18/L25 subcomplex. Contacts the 5S rRNA. Binds to the 5S rRNA independently of L5 and L18.

In terms of biological role, this is one of the proteins that binds to the 5S RNA in the ribosome where it forms part of the central protuberance. This Deinococcus geothermalis (strain DSM 11300 / CIP 105573 / AG-3a) protein is Large ribosomal subunit protein bL25.